Here is a 693-residue protein sequence, read N- to C-terminus: Golgin subfamily A member 6C (693 aa).

Disordered stretches follow at residues 20 to 71 (NKLA…DSQY), 497 to 547 (LPGE…GTEQ), and 629 to 693 (NPAD…MQDT). Positions 73-611 (ELAVALESSS…KLLELQELVL (539 aa)) form a coiled coil. The segment covering 537-547 (LPKEKADGTEQ) has biased composition (basic and acidic residues). The segment covering 679–693 (PVQQIVQLSPVMQDT) has biased composition (polar residues).

The protein belongs to the GOLGA6 family.

This is Golgin subfamily A member 6C (GOLGA6C) from Homo sapiens (Human).